Reading from the N-terminus, the 2003-residue chain is Neurogenic locus notch homolog protein 4 (2003 aa).

A signal peptide spans 1–23 (MQPPSLLLLLLLLLLLCVSVVRP). EGF-like domains follow at residues 24-63 (RGLL…ETCQ), 64-115 (FPDP…ERCQ), 118-155 (LEDP…EQCQ), and 156-192 (LRDF…HACE). The Extracellular portion of the chain corresponds to 24 to 1447 (RGLLCGSFPE…TAPPANQLPW (1424 aa)). 48 cysteine pairs are disulfide-bonded: Cys28–Cys41, Cys35–Cys51, Cys53–Cys62, Cys68–Cys80, Cys74–Cys103, Cys105–Cys114, Cys122–Cys133, Cys127–Cys143, Cys145–Cys154, Cys160–Cys171, Cys165–Cys180, Cys182–Cys191, Cys198–Cys211, Cys205–Cys220, Cys222–Cys231, Cys238–Cys249, Cys243–Cys262, Cys264–Cys273, Cys280–Cys291, Cys285–Cys300, Cys302–Cys311, Cys318–Cys332, Cys326–Cys341, Cys343–Cys352, Cys359–Cys370, Cys364–Cys379, Cys381–Cys390, Cys396–Cys407, Cys401–Cys418, Cys420–Cys429, Cys436–Cys452, Cys446–Cys461, Cys463–Cys472, Cys479–Cys490, Cys484–Cys499, Cys501–Cys510, Cys517–Cys528, Cys522–Cys537, Cys539–Cys548, Cys555–Cys566, Cys560–Cys575, Cys577–Cys586, Cys593–Cys604, Cys598–Cys613, Cys615–Cys624, Cys629–Cys640, Cys634–Cys649, and Cys651–Cys658. The EGF-like 5; calcium-binding domain occupies 194 to 232 (DVNECFQDPGPCPKGTSCHNTLGSFQCLCPVGQEGPRCE). The EGF-like 6 domain occupies 234–274 (RAGPCPPRGCSNGGTCQLMPEKDSTFHLCLCPPGFIGPDCE). The 37-residue stretch at 276–312 (NPDNCVSHQCQNGGTCQDGLDTYTCLCPETWTGWDCS) folds into the EGF-like 7; calcium-binding domain. The EGF-like 8; calcium-binding domain maps to 314–353 (DVDECETQGPPHCRNGGTCQNSAGSFHCVCVSGWGGTSCE). Residues 355-391 (NLDDCIAATCAPGSTCIDRVGSFSCLCPPGRTGLLCH) enclose the EGF-like 9; calcium-binding domain. Residues 392-430 (LEDMCLSQPCHGDAQCSTNPLTGSTLCLCQPGYSGPTCH) form the EGF-like 10 domain. The region spanning 432-473 (DLDECLMAQQGPSPCEHGGSCLNTPGSFNCLCPPGYTGSRCE) is the EGF-like 11; calcium-binding domain. The 37-residue stretch at 475–511 (DHNECLSQPCHPGSTCLDLLATFHCLCPPGLEGQLCE) folds into the EGF-like 12; calcium-binding domain. The EGF-like 13; calcium-binding domain occupies 513–549 (ETNECASAPCLNHADCHDLLNGFQCICLPGFSGTRCE). The EGF-like 14; calcium-binding domain maps to 551-587 (DIDECRSSPCANGGQCQDQPGAFHCKCLPGFEGPRCQ). An EGF-like 15; calcium-binding domain is found at 589–625 (EVDECLSDPCPVGASCLDLPGAFFCLCPSGFTGQLCE). EGF-like domains lie at 626–659 (VPLC…PGCA), 661–689 (PEDN…PECE), 691–727 (ELGG…PTCS), 729–765 (EMTA…PQCQ), 767–803 (STDY…PRCE), 806–842 (LRPS…GSCQ), 844–880 (LMDL…PLCN), 882–928 (PLSS…SLCQ), 930–966 (HVNP…QNCS), 968–1004 (ELDA…LRCE), 1006–1044 (DVDE…QWCE), 1046–1085 (EIDP…PTCS), 1087–1126 (RAPS…PDCL), and 1130–1171 (APKG…PRCQ). Asn664 is a glycosylation site (N-linked (GlcNAc...) asparagine). 47 disulfide bridges follow: Cys665/Cys672, Cys667/Cys677, Cys679/Cys688, Cys695/Cys706, Cys700/Cys715, Cys717/Cys726, Cys733/Cys744, Cys738/Cys753, Cys755/Cys764, Cys771/Cys782, Cys776/Cys791, Cys793/Cys802, Cys810/Cys821, Cys815/Cys830, Cys832/Cys841, Cys848/Cys859, Cys853/Cys868, Cys870/Cys879, Cys886/Cys907, Cys901/Cys916, Cys918/Cys927, Cys934/Cys945, Cys939/Cys954, Cys956/Cys965, Cys972/Cys983, Cys977/Cys992, Cys994/Cys1003, Cys1010/Cys1023, Cys1015/Cys1032, Cys1034/Cys1043, Cys1050/Cys1061, Cys1055/Cys1073, Cys1075/Cys1084, Cys1091/Cys1102, Cys1096/Cys1114, Cys1116/Cys1125, Cys1134/Cys1146, Cys1140/Cys1159, Cys1161/Cys1170, Cys1178/Cys1191, Cys1187/Cys1203, Cys1214/Cys1238, Cys1220/Cys1233, Cys1229/Cys1245, Cys1251/Cys1277, Cys1259/Cys1272, and Cys1268/Cys1284. N-linked (GlcNAc...) asparagine glycosylation is present at Asn714. N-linked (GlcNAc...) asparagine glycosylation is present at Asn964. An N-linked (GlcNAc...) asparagine glycan is attached at Asn1143. LNR repeat units follow at residues 1170 to 1213 (CQKP…PWKG), 1214 to 1250 (CPSH…TPPA), and 1251 to 1294 (CTPA…PEWG). A disordered region spans residues 1347-1371 (AEEKLGGTRDPTYQERAAPQTQPLG). A helical transmembrane segment spans residues 1448-1468 (PVLCSPVAGVILLALGALLVL). The Cytoplasmic segment spans residues 1469 to 2003 (QLIRRRRREH…PINQGGEGKK (535 aa)). The tract at residues 1485-1508 (PGFTRRPRTQSAPHRRRPPLGEDS) is disordered. Basic residues predominate over residues 1489-1502 (RRPRTQSAPHRRRP). ANK repeat units lie at residues 1633–1665 (TGET…QPDR), 1666–1698 (AGRT…DART), 1700–1732 (DGTT…ARDK), 1733–1765 (WGKT…AQDN), and 1766–1798 (REQT…LRDQ). 2 disordered regions span residues 1900–1927 (LSGV…RPNP) and 1968–2003 (PPPC…EGKK).

The protein belongs to the NOTCH family. In terms of assembly, heterodimer of a C-terminal fragment N(TM) and a N-terminal fragment N(EC) which are probably linked by disulfide bonds. Interacts with MAML1, MAML2 and MAML3 which act as transcriptional coactivators for NOTCH4. As to quaternary structure, (Microbial infection) Interacts with Epstein-Barr virus (EBV) RK-BARF0. Post-translationally, synthesized in the endoplasmic reticulum as an inactive form which is proteolytically cleaved by a furin-like convertase in the trans-Golgi network before it reaches the plasma membrane to yield an active, ligand-accessible form. Cleavage results in a C-terminal fragment N(TM) and a N-terminal fragment N(EC). Following ligand binding, it is cleaved by TNF-alpha converting enzyme (TACE) to yield a membrane-associated intermediate fragment called notch extracellular truncation (NEXT). This fragment is then cleaved by presenilin dependent gamma-secretase to release a notch-derived peptide containing the intracellular domain (NICD) from the membrane. In terms of processing, phosphorylated. In terms of tissue distribution, highly expressed in the heart, moderately in the lung and placenta and at low levels in the liver, skeletal muscle, kidney, pancreas, spleen, lymph node, thymus, bone marrow and fetal liver. No expression was seen in adult brain or peripheral blood leukocytes.

It localises to the cell membrane. Its subcellular location is the nucleus. Functions as a receptor for membrane-bound ligands Jagged1, Jagged2 and Delta1 to regulate cell-fate determination. Upon ligand activation through the released notch intracellular domain (NICD) it forms a transcriptional activator complex with RBPJ/RBPSUH and activates genes of the enhancer of split locus. Affects the implementation of differentiation, proliferation and apoptotic programs. May regulate branching morphogenesis in the developing vascular system. This is Neurogenic locus notch homolog protein 4 from Homo sapiens (Human).